Here is a 126-residue protein sequence, read N- to C-terminus: S-adenosylmethionine decarboxylase proenzyme (126 aa).

Residue serine 63 is the Schiff-base intermediate with substrate; via pyruvic acid of the active site. Pyruvic acid (Ser); by autocatalysis is present on serine 63. The active-site Proton acceptor; for processing activity is histidine 68. The active-site Proton donor; for catalytic activity is cysteine 83.

Belongs to the prokaryotic AdoMetDC family. Type 1 subfamily. As to quaternary structure, heterotetramer of two alpha and two beta chains arranged as a dimer of alpha/beta heterodimers. Requires pyruvate as cofactor. In terms of processing, is synthesized initially as an inactive proenzyme. Formation of the active enzyme involves a self-maturation process in which the active site pyruvoyl group is generated from an internal serine residue via an autocatalytic post-translational modification. Two non-identical subunits are generated from the proenzyme in this reaction, and the pyruvate is formed at the N-terminus of the alpha chain, which is derived from the carboxyl end of the proenzyme. The post-translation cleavage follows an unusual pathway, termed non-hydrolytic serinolysis, in which the side chain hydroxyl group of the serine supplies its oxygen atom to form the C-terminus of the beta chain, while the remainder of the serine residue undergoes an oxidative deamination to produce ammonia and the pyruvoyl group blocking the N-terminus of the alpha chain.

The catalysed reaction is S-adenosyl-L-methionine + H(+) = S-adenosyl 3-(methylsulfanyl)propylamine + CO2. It participates in amine and polyamine biosynthesis; S-adenosylmethioninamine biosynthesis; S-adenosylmethioninamine from S-adenosyl-L-methionine: step 1/1. Its function is as follows. Catalyzes the decarboxylation of S-adenosylmethionine to S-adenosylmethioninamine (dcAdoMet), the propylamine donor required for the synthesis of the polyamines spermine and spermidine from the diamine putrescine. The sequence is that of S-adenosylmethionine decarboxylase proenzyme from Syntrophomonas wolfei subsp. wolfei (strain DSM 2245B / Goettingen).